Here is a 98-residue protein sequence, read N- to C-terminus: NADH-ubiquinone oxidoreductase chain 4L (98 aa).

Transmembrane regions (helical) follow at residues 1–21 (MSLVYMNTALAFSISMLGLLM), 30–50 (LLCLEGMMLSLFTLGAITILT), and 61–81 (IVLLVFAACEAAVGLSLLVMV).

This sequence belongs to the complex I subunit 4L family. Core subunit of respiratory chain NADH dehydrogenase (Complex I) which is composed of 45 different subunits.

It localises to the mitochondrion inner membrane. It carries out the reaction a ubiquinone + NADH + 5 H(+)(in) = a ubiquinol + NAD(+) + 4 H(+)(out). Functionally, core subunit of the mitochondrial membrane respiratory chain NADH dehydrogenase (Complex I) which catalyzes electron transfer from NADH through the respiratory chain, using ubiquinone as an electron acceptor. Part of the enzyme membrane arm which is embedded in the lipid bilayer and involved in proton translocation. The polypeptide is NADH-ubiquinone oxidoreductase chain 4L (MT-ND4L) (Crocidura russula (Greater white-toothed shrew)).